Here is a 141-residue protein sequence, read N- to C-terminus: 15 kDa lipoprotein (141 aa).

A signal peptide spans 1–17 (MVKRGRFALCLAVLLGA). A lipid anchor (N-palmitoyl cysteine) is attached at Cys18. A lipid anchor (S-diacylglycerol cysteine) is attached at Cys18.

The protein resides in the cell membrane. This Treponema pallidum (strain Nichols) protein is 15 kDa lipoprotein (tpp15).